Reading from the N-terminus, the 657-residue chain is Glycogen debranching enzyme (657 aa).

Residue Asp-336 is the Nucleophile of the active site. The active-site Proton donor is the Glu-371. The tract at residues Ala-460–Lys-479 is disordered.

The protein belongs to the glycosyl hydrolase 13 family.

It catalyses the reaction Hydrolysis of (1-&gt;6)-alpha-D-glucosidic linkages to branches with degrees of polymerization of three or four glucose residues in limit dextrin.. It functions in the pathway glycan degradation; glycogen degradation. Its function is as follows. Removes maltotriose and maltotetraose chains that are attached by 1,6-alpha-linkage to the limit dextrin main chain, generating a debranched limit dextrin. In Escherichia coli O127:H6 (strain E2348/69 / EPEC), this protein is Glycogen debranching enzyme.